A 520-amino-acid chain; its full sequence is CUGBP Elav-like family member 4 (520 aa).

RRM domains are found at residues 47–128, 135–215, and 435–513; these read IKLF…PADS, RKLF…FADT, and CNLF…LKRP.

It belongs to the CELF/BRUNOL family.

The protein localises to the nucleus. It is found in the cytoplasm. RNA-binding protein that may be implicated in the regulation of pre-mRNA alternative splicing. The protein is CUGBP Elav-like family member 4 (celf4) of Danio rerio (Zebrafish).